Reading from the N-terminus, the 302-residue chain is Glycine--tRNA ligase alpha subunit (302 aa).

The protein belongs to the class-II aminoacyl-tRNA synthetase family. In terms of assembly, tetramer of two alpha and two beta subunits.

It is found in the cytoplasm. The enzyme catalyses tRNA(Gly) + glycine + ATP = glycyl-tRNA(Gly) + AMP + diphosphate. The protein is Glycine--tRNA ligase alpha subunit of Xanthomonas axonopodis pv. citri (strain 306).